The primary structure comprises 302 residues: tRNA-cytidine(32) 2-sulfurtransferase (302 aa).

The PP-loop motif signature appears at 43-48 (SGGKDS). [4Fe-4S] cluster contacts are provided by cysteine 118, cysteine 121, and cysteine 209.

Belongs to the TtcA family. Homodimer. Mg(2+) serves as cofactor. The cofactor is [4Fe-4S] cluster.

The protein resides in the cytoplasm. It carries out the reaction cytidine(32) in tRNA + S-sulfanyl-L-cysteinyl-[cysteine desulfurase] + AH2 + ATP = 2-thiocytidine(32) in tRNA + L-cysteinyl-[cysteine desulfurase] + A + AMP + diphosphate + H(+). It functions in the pathway tRNA modification. Its function is as follows. Catalyzes the ATP-dependent 2-thiolation of cytidine in position 32 of tRNA, to form 2-thiocytidine (s(2)C32). The sulfur atoms are provided by the cysteine/cysteine desulfurase (IscS) system. The sequence is that of tRNA-cytidine(32) 2-sulfurtransferase from Polynucleobacter necessarius subsp. necessarius (strain STIR1).